The chain runs to 270 residues: NAD(P)H-hydrate epimerase (270 aa).

One can recognise a YjeF N-terminal domain in the interval 25–234 (FQQLMDLMQN…DLLAPEAIYQ (210 aa)). 73-77 (DNGGQ) is a binding site for (6S)-NADPHX. 2 residues coordinate K(+): asparagine 74 and aspartate 144. (6S)-NADPHX contacts are provided by residues 148–154 (GVGLYGH) and glutamate 177. Threonine 180 provides a ligand contact to K(+).

Belongs to the NnrE/AIBP family. Requires K(+) as cofactor.

The catalysed reaction is (6R)-NADHX = (6S)-NADHX. It catalyses the reaction (6R)-NADPHX = (6S)-NADPHX. Catalyzes the epimerization of the S- and R-forms of NAD(P)HX, a damaged form of NAD(P)H that is a result of enzymatic or heat-dependent hydration. This is a prerequisite for the S-specific NAD(P)H-hydrate dehydratase to allow the repair of both epimers of NAD(P)HX. This is NAD(P)H-hydrate epimerase from Legionella pneumophila serogroup 1 (strain 2300/99 Alcoy).